The chain runs to 388 residues: FBD-associated F-box protein At5g60610 (388 aa).

The F-box domain occupies 1–47; that stretch reads MDRISGLPDELLVKIISFVPTKVAVSTSILSKRWESLWKWVPKLECD. Residues 337–388 form the FBD domain; sequence NWKNIQRSVPKCLKSSLKTLEFAGYTARPEERDFLSFIFKKARCLKTSSISH.

The chain is FBD-associated F-box protein At5g60610 from Arabidopsis thaliana (Mouse-ear cress).